Consider the following 426-residue polypeptide: Phosphomethylpyrimidine synthase (426 aa).

Substrate contacts are provided by residues Asn-65, Met-94, Tyr-123, His-162, 184 to 186 (SRG), 225 to 228 (DGMR), and Glu-264. His-268 is a Zn(2+) binding site. Tyr-291 serves as a coordination point for substrate. Residue His-332 coordinates Zn(2+). Residues Cys-408, Cys-411, and Cys-415 each contribute to the [4Fe-4S] cluster site.

This sequence belongs to the ThiC family. [4Fe-4S] cluster serves as cofactor.

The catalysed reaction is 5-amino-1-(5-phospho-beta-D-ribosyl)imidazole + S-adenosyl-L-methionine = 4-amino-2-methyl-5-(phosphooxymethyl)pyrimidine + CO + 5'-deoxyadenosine + formate + L-methionine + 3 H(+). It participates in cofactor biosynthesis; thiamine diphosphate biosynthesis. Catalyzes the synthesis of the hydroxymethylpyrimidine phosphate (HMP-P) moiety of thiamine from aminoimidazole ribotide (AIR) in a radical S-adenosyl-L-methionine (SAM)-dependent reaction. The chain is Phosphomethylpyrimidine synthase from Methanococcus maripaludis (strain DSM 14266 / JCM 13030 / NBRC 101832 / S2 / LL).